We begin with the raw amino-acid sequence, 132 residues long: Lectin OAA (132 aa).

2 repeat units span residues 1 to 66 (ALYN…TLLG) and 67 to 132 (NNSY…GTTL). A 2 X approximate tandem repeats region spans residues 1–132 (ALYNVENQWG…GPIGFKGTTL (132 aa)).

As to quaternary structure, monomer.

Functionally, lectin specific for high mannose N-glycans, recognizes the branched moiety of these glycans. Does not recognize other types of N-glycans or monosaccharides. Agglutinates trypsin-treated rabbit erythrocytes. Does not require divalent cations for activity. Inhibits HIV replication in MT4 cells with an EC(50) of 45 nM. Binds to the HIV envelope glycoprotein gp120. The sequence is that of Lectin OAA from Planktothrix agardhii (Oscillatoria agardhii).